A 95-amino-acid chain; its full sequence is Large ribosomal subunit protein eL37x (95 aa).

Positions 19, 22, 34, and 37 each coordinate Zn(2+). A C4-type zinc finger spans residues 19–37; the sequence is CVRCGRRSFHIQKSRCSAC. A disordered region spans residues 73-95; that stretch reads RFKTGFREGTEAKPRSKASASSA. Positions 77–86 are enriched in basic and acidic residues; the sequence is GFREGTEAKP.

This sequence belongs to the eukaryotic ribosomal protein eL37 family. Zn(2+) is required as a cofactor.

Functionally, binds to the 23S rRNA. This is Large ribosomal subunit protein eL37x (RPL37C) from Arabidopsis thaliana (Mouse-ear cress).